Here is a 117-residue protein sequence, read N- to C-terminus: Large ribosomal subunit protein uL18 (117 aa).

This sequence belongs to the universal ribosomal protein uL18 family. Part of the 50S ribosomal subunit; part of the 5S rRNA/L5/L18/L25 subcomplex. Contacts the 5S and 23S rRNAs.

This is one of the proteins that bind and probably mediate the attachment of the 5S RNA into the large ribosomal subunit, where it forms part of the central protuberance. This is Large ribosomal subunit protein uL18 from Aster yellows witches'-broom phytoplasma (strain AYWB).